The chain runs to 1073 residues: Probable inorganic carbon transporter subunit DabA (1073 aa).

Cysteine 551, aspartate 553, histidine 742, and cysteine 757 together coordinate Zn(2+).

The protein belongs to the inorganic carbon transporter (TC 9.A.2) DabA family. As to quaternary structure, forms a complex with DabB. It depends on Zn(2+) as a cofactor.

The protein resides in the cell inner membrane. Functionally, part of an energy-coupled inorganic carbon pump. The polypeptide is Probable inorganic carbon transporter subunit DabA (Methylococcus capsulatus (strain ATCC 33009 / NCIMB 11132 / Bath)).